The following is a 611-amino-acid chain: MAU2 chromatid cohesion factor homolog (611 aa).

5 TPR repeats span residues Tyr11–Pro46, Phe91–Glu124, Phe131–Cys164, Pro371–Pro404, and Ala490–Ile523. Residues Trp581–Ser611 form a disordered region. Over residues Val585 to Ser611 the composition is skewed to polar residues.

The protein belongs to the SCC4/mau-2 family. As to quaternary structure, component of the cohesin loading complex.

The protein localises to the nucleus. Its subcellular location is the nucleoplasm. Its function is as follows. Required for association of the cohesin complex with chromatin during interphase. Plays a role in sister chromatid cohesion and normal progression through prometaphase. This chain is MAU2 chromatid cohesion factor homolog, found in Nematostella vectensis (Starlet sea anemone).